The sequence spans 350 residues: Dauer larva development regulatory growth factor daf-7 (350 aa).

A signal peptide spans M1–T21. Residues F22–R234 constitute a propeptide that is removed on maturation. The N-linked (GlcNAc...) asparagine glycan is linked to N23. 4 cysteine pairs are disulfide-bonded: C241-C251, C250-C315, C278-C347, and C282-C349.

It belongs to the TGF-beta family. As to expression, expressed in the chemosensory neurons, including in the ASJ neurons in males. Expressed in the ASI neurons.

It is found in the secreted. Functionally, under harsh environmental conditions, larvae enter a developmentally arrested state known as dauer; TGF-beta-like daf-7 acts to inhibit dauer larva formation and promote growth. May be a ligand to cell surface receptor daf-4. May act as a negative regulator of dauer larva development by transducing chemosensory information from ASI neurons. Involved in sensitivity to CO2 levels. Involved in mate searching behavior of males, acting in concert with the neuropeptide pdf-1. In AWC neurons, acts to promote expression of srsx-3, a member of the GPCR family. The polypeptide is Dauer larva development regulatory growth factor daf-7 (Caenorhabditis elegans).